Reading from the N-terminus, the 246-residue chain is Aquaporin AqpM (246 aa).

The Cytoplasmic segment spans residues 1–11; that stretch reads MVSLTKRCIAE. A helical membrane pass occupies residues 12–32; that stretch reads FIGTFFLVFFGAGAAAITLMI. Over 33-45 the chain is Extracellular; it reads ASGGTAPNPFNIG. A helical membrane pass occupies residues 46-66; that stretch reads IGLLGGLGDWVAIGLAFGFAI. Topologically, residues 67 to 69 are cytoplasmic; it reads AAS. Residues 70 to 90 traverse the membrane as a helical segment; it reads IYALGNISGCHINPAVTIGLW. Positions 82–84 match the NPA 1 motif; that stretch reads NPA. Over 91-103 the chain is Extracellular; that stretch reads SVKKFPGRDVVPY. The chain crosses the membrane as a helical span at residues 104–124; the sequence is IIAQLLGAAFASFIFLQCAGI. Residues 125–145 are Cytoplasmic-facing; that stretch reads TAATIGGLGATAPFPGIGYWQ. The chain crosses the membrane as a helical span at residues 146–166; that stretch reads AMLAETVGTFLLMITIMGIAV. Residues 167-172 are Extracellular-facing; sequence DERAPK. Residues 173 to 193 traverse the membrane as a helical segment; it reads GFAGIIIGLTVAGIITTIGNI. The Cytoplasmic segment spans residues 194–217; it reads TGSSLNPARTFGPYLNDMVFAGTN. Positions 199 to 201 match the NPA 2 motif; that stretch reads NPA. The helical transmembrane segment at 218-238 threads the bilayer; that stretch reads LWNYFPIYVIGPVVGAVLAAL. Over 239-246 the chain is Extracellular; the sequence is TYQYLTSE.

This sequence belongs to the MIP/aquaporin (TC 1.A.8) family. Homotetramer.

The protein resides in the cell membrane. Its function is as follows. Channel that permits osmotically driven movement of water in both directions. It mediates rapid entry or exit of water in response to abrupt changes in osmolarity. Also exhibits a transient but reproducible increase in the initial glycerol flux. The chain is Aquaporin AqpM (aqpM) from Methanothermobacter thermautotrophicus (strain ATCC 29096 / DSM 1053 / JCM 10044 / NBRC 100330 / Delta H) (Methanobacterium thermoautotrophicum).